The sequence spans 689 residues: Glycine--tRNA ligase beta subunit (689 aa).

It belongs to the class-II aminoacyl-tRNA synthetase family. Tetramer of two alpha and two beta subunits.

It localises to the cytoplasm. The enzyme catalyses tRNA(Gly) + glycine + ATP = glycyl-tRNA(Gly) + AMP + diphosphate. This chain is Glycine--tRNA ligase beta subunit, found in Pseudoalteromonas translucida (strain TAC 125).